The chain runs to 359 residues: MTNFCNEWVSYSQMIKRFLSLMVLNTVCYQASALELNVYLWEDTIAPSVVEAWHKKTGVSVNLFHFDNDDERSLLMLKSVQLPFDIMVLDNVSAFIFSRQNVFEDLTALPNRANNDPMWLQACGTHAVPYFWGSVGIAYRKSLFDKPPTQWSEVVDIAPAHRGRVGMLKDSVETLLPALYMLNASPITDSIDTLRQAYRLLDAANPHILTYEYVLSYVRSHPQTDNLHMAVSYSGDHYSLNRFFNTQDWDFSVPEGRPYLWVDCMAVNSVSPNTVQAKAFLDFLMKPDIAAINAEYIRAASPNYKARALLPVEHREDLSIYLPEQRLAEGIIDSELSAKNLSLRAKIISSVTYQYEAKP.

Positions 1 to 33 (MTNFCNEWVSYSQMIKRFLSLMVLNTVCYQASA) are cleaved as a signal peptide.

This sequence belongs to the bacterial solute-binding protein PotD/PotF family.

The protein resides in the periplasm. In terms of biological role, acts as a sensor of norspermidine and enhances biofilm formation. When complexed to norspermidine, could interact with the periplasmic portion of MbaA to regulate its enzymatic activity. This is Norspermidine sensor (nspS) from Vibrio cholerae serotype O1 (strain ATCC 39315 / El Tor Inaba N16961).